A 101-amino-acid polypeptide reads, in one-letter code: Small ribosomal subunit protein uS14 (101 aa).

Belongs to the universal ribosomal protein uS14 family. As to quaternary structure, part of the 30S ribosomal subunit. Contacts proteins S3 and S10.

Functionally, binds 16S rRNA, required for the assembly of 30S particles and may also be responsible for determining the conformation of the 16S rRNA at the A site. The polypeptide is Small ribosomal subunit protein uS14 (Neorickettsia sennetsu (strain ATCC VR-367 / Miyayama) (Ehrlichia sennetsu)).